We begin with the raw amino-acid sequence, 253 residues long: Major prion protein (253 aa).

The first 22 residues, 1-22, serve as a signal peptide directing secretion; the sequence is MANLGCWMLVLFVATWSDLGLC. The segment at 23 to 38 is interaction with ADGRG6; that stretch reads KKRPKPGGWNTGGSRY. The segment at 23–230 is interaction with GRB2, ERI3 and SYN1; that stretch reads KKRPKPGGWN…ESQAYYQRGS (208 aa). The interval 26–108 is disordered; sequence PKPGGWNTGG…WNKPSKPKTN (83 aa). 5 repeat units span residues 51-59, 60-67, 68-75, 76-83, and 84-91. The interval 51–91 is 5 X 8 AA tandem repeats of P-H-G-G-G-W-G-Q; sequence PQGGGGWGQPHGGGWGQPHGGGWGQPHGGGWGQPHGGGWGQ. A compositionally biased stretch (gly residues) spans 52-95; it reads QGGGGWGQPHGGGWGQPHGGGWGQPHGGGWGQPHGGGWGQGGGT. Positions 61, 62, 63, 69, 70, 71, 77, 78, 79, 85, 86, and 87 each coordinate Cu(2+). A disulfide bond links Cys179 and Cys214. Asn181 and Asn197 each carry an N-linked (GlcNAc...) asparagine glycan. Residue Ser230 is the site of GPI-anchor amidated serine attachment. The propeptide at 231-253 is removed in mature form; the sequence is SMVLFSSPPVILLISFLIFLIVG.

The protein belongs to the prion family. In terms of assembly, monomer and homodimer. Has a tendency to aggregate into amyloid fibrils containing a cross-beta spine, formed by a steric zipper of superposed beta-strands. Soluble oligomers may represent an intermediate stage on the path to fibril formation. Copper binding may promote oligomerization. Interacts with GRB2, APP, ERI3/PRNPIP and SYN1. Mislocalized cytosolically exposed PrP interacts with MGRN1; this interaction alters MGRN1 subcellular location and causes lysosomal enlargement. Interacts with APP. Interacts with KIAA1191. Interacts with ADGRG6.

The protein resides in the cell membrane. Its subcellular location is the golgi apparatus. Functionally, its primary physiological function is unclear. May play a role in neuronal development and synaptic plasticity. May be required for neuronal myelin sheath maintenance. May promote myelin homeostasis through acting as an agonist for ADGRG6 receptor. May play a role in iron uptake and iron homeostasis. Soluble oligomers are toxic to cultured neuroblastoma cells and induce apoptosis (in vitro). Association with GPC1 (via its heparan sulfate chains) targets PRNP to lipid rafts. Also provides Cu(2+) or Zn(2+) for the ascorbate-mediated GPC1 deaminase degradation of its heparan sulfate side chains. The polypeptide is Major prion protein (PRNP) (Gorilla gorilla gorilla (Western lowland gorilla)).